The chain runs to 162 residues: tRNA (cytidine(34)-2'-O)-methyltransferase (162 aa).

The S-adenosyl-L-methionine site is built by L83, G105, I127, and S135.

It belongs to the class IV-like SAM-binding methyltransferase superfamily. RNA methyltransferase TrmH family. TrmL subfamily. In terms of assembly, homodimer.

The protein localises to the cytoplasm. It catalyses the reaction cytidine(34) in tRNA + S-adenosyl-L-methionine = 2'-O-methylcytidine(34) in tRNA + S-adenosyl-L-homocysteine + H(+). The catalysed reaction is 5-carboxymethylaminomethyluridine(34) in tRNA(Leu) + S-adenosyl-L-methionine = 5-carboxymethylaminomethyl-2'-O-methyluridine(34) in tRNA(Leu) + S-adenosyl-L-homocysteine + H(+). Functionally, methylates the ribose at the nucleotide 34 wobble position in the two leucyl isoacceptors tRNA(Leu)(CmAA) and tRNA(Leu)(cmnm5UmAA). Catalyzes the methyl transfer from S-adenosyl-L-methionine to the 2'-OH of the wobble nucleotide. This is tRNA (cytidine(34)-2'-O)-methyltransferase from Yersinia pestis.